The sequence spans 740 residues: ATP-dependent RNA helicase DDX1 (740 aa).

The interval 1–295 is necessary for interaction with HNRNPK; the sequence is MAAFSEMGVM…APKALIVEPS (295 aa). Residues 1-448 form an interaction with dsRNA region; that stretch reads MAAFSEMGVM…DTVHHVVVPV (448 aa). Residues 1-525 are necessary for interaction with RELA; the sequence is MAAFSEMGVM…KIDCDNLEQY (525 aa). The Helicase ATP-binding domain maps to 2–428; the sequence is AAFSEMGVMP…SEKIMHFPTW (427 aa). Residue 46 to 53 participates in ATP binding; sequence AETGSGKT. Positions 70–247 constitute a B30.2/SPRY domain; sequence DQQEGKKGKA…LKFNFGEEEF (178 aa). N6-acetyllysine occurs at positions 239 and 268. N6-acetyllysine; alternate is present on K281. Residue K281 forms a Glycyl lysine isopeptide (Lys-Gly) (interchain with G-Cter in SUMO2); alternate linkage. A DEAD box motif is present at residues 370–373; sequence DEAD. S481 bears the Phosphoserine mark. Residues 493 to 681 enclose the Helicase C-terminal domain; that stretch reads KGEYAVRAIK…QVEPDIKVPV (189 aa). The necessary for interaction with HNRNPK stretch occupies residues 525–740; that stretch reads YFMQQGGGPD…YLPNQLFRTF (216 aa).

This sequence belongs to the DEAD box helicase family. DDX1 subfamily. Found in a multi-helicase-TICAM1 complex at least composed of DHX36, DDX1, DDX21 and TICAM1; this complex exists in resting cells with or without poly(I:C) RNA ligand stimulation. Interacts with DHX36. Interacts (via B30.2/SPRY domain) with DDX21 (via N-terminus); this interaction serves as bridges to TICAM1. Interacts with FAM98A (via N- and C-terminus). Interacts with PHF5A (via C-terminus). Interacts with MBNL1. Interacts with CSTF2. Interacts with HNRNPK. Interacts with ATM. Interacts with RELA (via C-terminus). Component of the tRNA-splicing ligase complex. Interacts with PQBP1. Interacts with ERCC6. In terms of processing, phosphorylated by ATM kinase; phosphorylation is increased in response to ionizing radiation (IR).

Its subcellular location is the nucleus. It is found in the cytoplasm. The protein localises to the cytoplasmic granule. It localises to the cytosol. The protein resides in the mitochondrion. It catalyses the reaction ATP + H2O = ADP + phosphate + H(+). In terms of biological role, acts as an ATP-dependent RNA helicase, able to unwind both RNA-RNA and RNA-DNA duplexes. Possesses 5' single-stranded RNA overhang nuclease activity. Possesses ATPase activity on various RNA, but not DNA polynucleotides. May play a role in RNA clearance at DNA double-strand breaks (DSBs), thereby facilitating the template-guided repair of transcriptionally active regions of the genome. Together with RELA, acts as a coactivator to enhance NF-kappa-B-mediated transcriptional activation. Acts as a positive transcriptional regulator of cyclin CCND2 expression. Binds to the cyclin CCND2 promoter region. Associates with chromatin at the NF-kappa-B promoter region via association with RELA. Binds to poly(A) RNA. May be involved in 3'-end cleavage and polyadenylation of pre-mRNAs. Component of the tRNA-splicing ligase complex required to facilitate the enzymatic turnover of catalytic subunit RTCB: together with archease (ZBTB8OS), acts by facilitating the guanylylation of RTCB, a key intermediate step in tRNA ligation. Component of a multi-helicase-TICAM1 complex that acts as a cytoplasmic sensor of viral double-stranded RNA (dsRNA) and plays a role in the activation of a cascade of antiviral responses including the induction of pro-inflammatory cytokines via the adapter molecule TICAM1. Specifically binds (via helicase ATP-binding domain) on both short and long poly(I:C) dsRNA. This is ATP-dependent RNA helicase DDX1 (DDX1) from Bos taurus (Bovine).